We begin with the raw amino-acid sequence, 861 residues long: APC membrane recruitment protein 3 (861 aa).

Disordered stretches follow at residues 1-77, 179-206, 261-289, 351-415, 514-558, 576-644, 716-742, and 786-822; these read MELK…PKGG, AEGK…PPGE, PSLE…GPLQ, PLCP…FPRD, RGPT…GGAT, GLLA…SQKE, MLEQ…STQD, and AHGS…SQQE. Residues 362–384 are compositionally biased toward polar residues; sequence SKASSIDTGTPKSEQPESVSTSD. Residues 518 to 530 are compositionally biased toward pro residues; it reads PRAPPTPGQPAAP. The segment covering 584–595 has biased composition (low complexity); that stretch reads ALGGATQGTGTL. The span at 598–609 shows a compositional bias: basic and acidic residues; it reads DASREEETRGHS. 2 stretches are compositionally biased toward polar residues: residues 615-629 and 719-730; these read SMES…TSGK and QKQSSSSPSMTT.

It belongs to the Amer family.

It localises to the cell membrane. Functionally, regulator of the canonical Wnt signaling pathway. Acts by specifically binding phosphatidylinositol 4,5-bisphosphate (PtdIns(4,5)P2), translocating to the cell membrane. The protein is APC membrane recruitment protein 3 (AMER3) of Homo sapiens (Human).